Consider the following 314-residue polypeptide: Thymidylate synthase (314 aa).

DUMP-binding positions include arginine 21 and 176-177 (RR). Residue cysteine 196 is the Nucleophile of the active site. DUMP contacts are provided by residues 216 to 219 (RSAD), asparagine 227, and 257 to 259 (HLY). Aspartate 219 lines the (6R)-5,10-methylene-5,6,7,8-tetrahydrofolate pocket. A (6R)-5,10-methylene-5,6,7,8-tetrahydrofolate-binding site is contributed by serine 313.

It belongs to the thymidylate synthase family. Bacterial-type ThyA subfamily. In terms of assembly, homodimer.

It is found in the cytoplasm. It catalyses the reaction dUMP + (6R)-5,10-methylene-5,6,7,8-tetrahydrofolate = 7,8-dihydrofolate + dTMP. Its pathway is pyrimidine metabolism; dTTP biosynthesis. Functionally, catalyzes the reductive methylation of 2'-deoxyuridine-5'-monophosphate (dUMP) to 2'-deoxythymidine-5'-monophosphate (dTMP) while utilizing 5,10-methylenetetrahydrofolate (mTHF) as the methyl donor and reductant in the reaction, yielding dihydrofolate (DHF) as a by-product. This enzymatic reaction provides an intracellular de novo source of dTMP, an essential precursor for DNA biosynthesis. The sequence is that of Thymidylate synthase from Listeria monocytogenes serovar 1/2a (strain ATCC BAA-679 / EGD-e).